The sequence spans 268 residues: Elongation factor Ts (268 aa).

Residues 81–84 (TDFV) are involved in Mg(2+) ion dislocation from EF-Tu.

Belongs to the EF-Ts family.

The protein localises to the cytoplasm. Associates with the EF-Tu.GDP complex and induces the exchange of GDP to GTP. It remains bound to the aminoacyl-tRNA.EF-Tu.GTP complex up to the GTP hydrolysis stage on the ribosome. The chain is Elongation factor Ts from Buchnera aphidicola subsp. Acyrthosiphon pisum (strain 5A).